The chain runs to 146 residues: 3-dehydroquinate dehydratase (146 aa).

The active-site Proton acceptor is Tyr22. Residues Asn73, His79, and Asp86 each contribute to the substrate site. Residue His99 is the Proton donor of the active site. Residues Val100–Ser101 and Arg110 contribute to the substrate site.

This sequence belongs to the type-II 3-dehydroquinase family. As to quaternary structure, homododecamer.

The catalysed reaction is 3-dehydroquinate = 3-dehydroshikimate + H2O. Its pathway is metabolic intermediate biosynthesis; chorismate biosynthesis; chorismate from D-erythrose 4-phosphate and phosphoenolpyruvate: step 3/7. Functionally, catalyzes a trans-dehydration via an enolate intermediate. This chain is 3-dehydroquinate dehydratase, found in Kineococcus radiotolerans (strain ATCC BAA-149 / DSM 14245 / SRS30216).